Consider the following 243-residue polypeptide: tRNA (guanine-N(1)-)-methyltransferase (243 aa).

S-adenosyl-L-methionine contacts are provided by residues glycine 108 and 127-132 (LGDFVL).

It belongs to the RNA methyltransferase TrmD family. As to quaternary structure, homodimer.

The protein localises to the cytoplasm. It carries out the reaction guanosine(37) in tRNA + S-adenosyl-L-methionine = N(1)-methylguanosine(37) in tRNA + S-adenosyl-L-homocysteine + H(+). Functionally, specifically methylates guanosine-37 in various tRNAs. The chain is tRNA (guanine-N(1)-)-methyltransferase from Streptococcus equi subsp. zooepidemicus (strain H70).